Reading from the N-terminus, the 688-residue chain is MSSRALTWPRTAKSSLLKQQTSSFVGQPKLGTPNCRSFSSTADRPINQSAEFSSSSKSYDRLGRRAKEKLLDREFFLSLLNSASTKREAKSYLARLKAQHPPKAQTEPTTGHSKGTVTQSLPSGVNLGSFYGASRSVYDSPVFRHDSTPLPPPSELPEERLHLALIKIRTPQLLDDTIINGVAKTLSQLSRLGMACCVVVDPGTAGNANTLRRVAAEQAERISIAVDAQPDSKSAHLDSVLSLSPMFPELPTVLSRKALLNPLRDGQIVVVAPIAYTEDVPKAVTISANDAILALTKELAGLAMRPDPDEDPWLTAQKIAKLQKEVSLDRVILLDPLGGIPSFRGPQTSHVFINMEQEFDDIKNELLHVQSSEACTATTPKGGNTFVEDPLERHLDNLQLSQNVLAMLPSASSGIITSPLEVSNSARTPQANPSDVSAVGTRRQRNPLIHNLLTDKPLLSSSLPMSRREAMNRRRGSINTPSSHTTFVKRGMPLTMIPNPRVEVWTAQNRPRLSLDDPSIDLPRLVQLIEDSFNRKLDVQDYLNRVNDRLAGLIIAGEYEGGAILTWELPPGVEDDGSPASEARMVPYLDKFAVLKRSQGAGGVADIVFNAMVRSCFPNGVCWRSRKDNPVNKWYFERSTGTWKLSDTNWTMFWTTPGLTENSQRFSDYEQVCRSIQPSWADDTGVVD.

The transit peptide at Met-1–Pro-45 directs the protein to the mitochondrion. 2 disordered regions span residues Met-1 to Tyr-59 and Leu-96 to Gln-119. Polar residues-rich tracts occupy residues Ala-12 to Val-25, Asn-34 to Lys-57, and Thr-106 to Gln-119. The N-acetyltransferase domain occupies Asn-509–Pro-678.

It belongs to the acetyltransferase family.

It is found in the mitochondrion. It catalyses the reaction L-glutamate + acetyl-CoA = N-acetyl-L-glutamate + CoA + H(+). It participates in amino-acid biosynthesis; L-arginine biosynthesis; N(2)-acetyl-L-ornithine from L-glutamate: step 1/4. Functionally, N-acetylglutamate synthase involved in arginine biosynthesis. The polypeptide is Amino-acid acetyltransferase, mitochondrial (arg2) (Aspergillus flavus (strain ATCC 200026 / FGSC A1120 / IAM 13836 / NRRL 3357 / JCM 12722 / SRRC 167)).